A 561-amino-acid polypeptide reads, in one-letter code: Sperm-tail PG-rich repeat-containing protein 2 (561 aa).

3 STPGR repeats span residues 21 to 34 (VGPG…PKQQ), 63 to 72 (PGPAHYNVSQ), and 97 to 104 (GPGPGSYN). Residues 123–143 (PAVSRNIDIPSIPSSGKSHGY) are disordered. STPGR repeat units follow at residues 164–191 (GPAY…NATG), 200–210 (GPGPGQYDIIQ), 250–285 (PGPG…TERF), 292–299 (TPAPGTYN), 334–367 (LPGP…FGSS), 421–438 (LPAP…MSQV), and 471–481 (GPGPATYSPVL).

The protein is Sperm-tail PG-rich repeat-containing protein 2 (Stpg2) of Mus musculus (Mouse).